Reading from the N-terminus, the 163-residue chain is Endoribonuclease YbeY (163 aa).

Residues H123, H127, and H133 each contribute to the Zn(2+) site.

This sequence belongs to the endoribonuclease YbeY family. Zn(2+) is required as a cofactor.

Its subcellular location is the cytoplasm. Its function is as follows. Single strand-specific metallo-endoribonuclease involved in late-stage 70S ribosome quality control and in maturation of the 3' terminus of the 16S rRNA. The protein is Endoribonuclease YbeY of Helicobacter hepaticus (strain ATCC 51449 / 3B1).